Here is a 177-residue protein sequence, read N- to C-terminus: Phycoerythrin beta subunit (177 aa).

(2R,3E)-phycoerythrobilin-binding residues include Tyr18, Lys28, Asn35, and Asp39. 15,16-dihydrobiliverdin contacts are provided by Cys50, Asp54, and Cys61. Positions 82, 84, and 85 each coordinate (2R,3E)-phycoerythrobilin. Residue Arg129 coordinates 15,16-dihydrobiliverdin. Residue Asn144 coordinates (2R,3E)-phycoerythrobilin. The 15,16-dihydrobiliverdin site is built by Gln148 and Lys149. (2R,3E)-phycoerythrobilin contacts are provided by Pro154, Gly156, and Cys158.

The protein belongs to the phycobiliprotein family. In terms of assembly, heterotetramer of 2 different alpha chains and 2 identical beta chains which form 2 alpha-beta heterodimers within the heterotetramer. The two alpha-beta heterodimers are rotated to an open configuration in contrast to the closed configuration found in other cryptophyte species due to the insertion of a single amino acid, 'Asp-65', in a conserved region of the alpha chain. In the open form, the central chromophores are not in physical contact but are separated by a water-filled channel. Post-translationally, contains three phycoerythrobilin chromophores and one 15,16-dihydrobiliverdin chromophore with binding of the phycoerythrobilin chromophores mediated by both the alpha and beta subunits.

The protein resides in the plastid. Its subcellular location is the chloroplast thylakoid membrane. Its function is as follows. Light-harvesting photosynthetic bile pigment-protein from the phycobiliprotein complex. The sequence is that of Phycoerythrin beta subunit from Hemiselmis andersenii (Cryptophyte alga).